A 157-amino-acid chain; its full sequence is Arginine repressor (157 aa).

Belongs to the ArgR family.

The protein resides in the cytoplasm. The protein operates within amino-acid biosynthesis; L-arginine biosynthesis [regulation]. Its function is as follows. Regulates arginine biosynthesis genes. The protein is Arginine repressor of Bacteroides fragilis (strain ATCC 25285 / DSM 2151 / CCUG 4856 / JCM 11019 / LMG 10263 / NCTC 9343 / Onslow / VPI 2553 / EN-2).